We begin with the raw amino-acid sequence, 156 residues long: MNFNATLIGQSITFIFFVWFSMKFVWPPIMNALETRKKQIADGLAAADRGKHELELAAKKAGDNMRDAKAQAAEVIAQAEKRAAQIVEEAKLAAKEEGDRQLAAAQANIEQEANRAREGLREQVAALAVAGAEKILRREVNAQTHADLLSQLKAEL.

The helical transmembrane segment at 7–29 threads the bilayer; sequence LIGQSITFIFFVWFSMKFVWPPI.

It belongs to the ATPase B chain family. F-type ATPases have 2 components, F(1) - the catalytic core - and F(0) - the membrane proton channel. F(1) has five subunits: alpha(3), beta(3), gamma(1), delta(1), epsilon(1). F(0) has three main subunits: a(1), b(2) and c(10-14). The alpha and beta chains form an alternating ring which encloses part of the gamma chain. F(1) is attached to F(0) by a central stalk formed by the gamma and epsilon chains, while a peripheral stalk is formed by the delta and b chains.

The protein resides in the cell inner membrane. Its function is as follows. F(1)F(0) ATP synthase produces ATP from ADP in the presence of a proton or sodium gradient. F-type ATPases consist of two structural domains, F(1) containing the extramembraneous catalytic core and F(0) containing the membrane proton channel, linked together by a central stalk and a peripheral stalk. During catalysis, ATP synthesis in the catalytic domain of F(1) is coupled via a rotary mechanism of the central stalk subunits to proton translocation. Component of the F(0) channel, it forms part of the peripheral stalk, linking F(1) to F(0). This Thiobacillus denitrificans (strain ATCC 25259 / T1) protein is ATP synthase subunit b.